The sequence spans 354 residues: UDP-3-O-acylglucosamine N-acyltransferase (354 aa).

The Proton acceptor role is filled by His257. Residues 335-354 (AQQVSKSKLRGRNPGGKQND) form a disordered region.

It belongs to the transferase hexapeptide repeat family. LpxD subfamily. In terms of assembly, homotrimer.

The catalysed reaction is a UDP-3-O-[(3R)-3-hydroxyacyl]-alpha-D-glucosamine + a (3R)-hydroxyacyl-[ACP] = a UDP-2-N,3-O-bis[(3R)-3-hydroxyacyl]-alpha-D-glucosamine + holo-[ACP] + H(+). The protein operates within bacterial outer membrane biogenesis; LPS lipid A biosynthesis. Its function is as follows. Catalyzes the N-acylation of UDP-3-O-acylglucosamine using 3-hydroxyacyl-ACP as the acyl donor. Is involved in the biosynthesis of lipid A, a phosphorylated glycolipid that anchors the lipopolysaccharide to the outer membrane of the cell. This chain is UDP-3-O-acylglucosamine N-acyltransferase, found in Rhizobium etli (strain ATCC 51251 / DSM 11541 / JCM 21823 / NBRC 15573 / CFN 42).